Reading from the N-terminus, the 395-residue chain is MLAEQENQENVPPAAKAPPPAAGTRVALGLLRGGPARPGPAAQAARNGEGRGAAAGQQQQPFSVYVDEPDEERRRPQRKKERDEEAADAPGLRAALGTVGERRPLAPLGNAMELSLDSPSIMDISITSEAEERPNVNNVPDYVSDIHTYLREMEVKCKPKIGYMKKQPDITNNMRAILVDWLVEVGEEYKLQNETLHLAVNYIDRFLSSMSVLRGKLQLVGTAAMLLASKFEEIYPPEVAEFVYITDDTYNKKQVLRMEHLILKVLSFDLAAPTINQFLTQYFLHQQTNAKVESLSMYLGELTLIDADPYLKYLPSVIAAAAFHLASYTITGQTWPESLCKVTGYTLEHIKPCLMDLHRTYLKAAQHTQQSIREKYKSTKYHAVSLIDAPETLDL.

A disordered region spans residues 1–93 (MLAEQENQEN…EEAADAPGLR (93 aa)). A compositionally biased stretch (low complexity) spans 27–60 (ALGLLRGGPARPGPAAQAARNGEGRGAAAGQQQQ).

This sequence belongs to the cyclin family. Cyclin AB subfamily. In terms of assembly, interacts with the CDK1 and CDK2 protein kinases to form serine/threonine kinase holoenzyme complexes.

It is found in the nucleus. Its subcellular location is the cytoplasm. Functionally, cyclin which controls both the G1/S and the G2/M transition phases of the cell cycle. Functions through the formation of specific serine/threonine kinase holoenzyme complexes with the cyclin-dependent protein kinases CDK1 and CDK2. The cyclin subunit confers the substrate specificity of these complexes and differentially interacts with and activates CDK1 and CDK2 throughout the cell cycle. This Gallus gallus (Chicken) protein is Cyclin-A2.